The primary structure comprises 515 residues: SWI/SNF global transcription activator complex subunit snf59 (515 aa).

The interval 1–226 (MEEEDITLEH…IHHVDSKNEE (226 aa)) is disordered. Basic and acidic residues-rich tracts occupy residues 7–37 (TLEH…DNSN), 50–59 (EEPKYHDNSN), 73–85 (EPEH…KEST), 94–103 (EEPKHHDNSN), and 116–125 (EEPKHHDSSN). Positions 126–136 (KESTNLDNSNM) are enriched in polar residues. A compositionally biased stretch (basic and acidic residues) spans 140 to 226 (ENQKNFKIEE…IHHVDSKNEE (87 aa)).

This sequence belongs to the RSC7/SWP82 family. SWP82 subfamily. Component of the SWI/SNF global transcription activator complex composed of at least arp9, arp42, snf5, snf22, snf30, snf59, sol1, ssr1, ssr2, ssr3, ssr4 and tfg3.

It is found in the nucleus. In terms of biological role, component of the SWI/SNF complex, an ATP-dependent chromatin remodeling complex, which is required for the positive and negative regulation of gene expression of a large number of genes. It changes chromatin structure by altering DNA-histone contacts within a nucleosome, leading eventually to a change in nucleosome position, thus facilitating or repressing binding of gene-specific transcription factors. The protein is SWI/SNF global transcription activator complex subunit snf59 (snf59) of Schizosaccharomyces pombe (strain 972 / ATCC 24843) (Fission yeast).